The chain runs to 338 residues: Purple acid phosphatase 17 (338 aa).

Residues Met1–Gly31 form the signal peptide. Asp53 contributes to the Fe cation binding site. An N-linked (GlcNAc...) asparagine glycan is attached at Asn61. Residues Asp86 and Tyr89 each coordinate Fe cation. Asp86 is a binding site for Zn(2+). Zn(2+) is bound by residues Asn124 and His218. The active-site Proton donor is His227. His253 serves as a coordination point for Zn(2+). Substrate is bound at residue His253–His255. Residue His255 participates in Fe cation binding.

Belongs to the metallophosphoesterase superfamily. Purple acid phosphatase family. As to quaternary structure, homodimer. Fe cation serves as cofactor. The cofactor is Zn(2+). Expressed in roots, stems, leaves, flowers and siliques.

Its subcellular location is the secreted. It catalyses the reaction a phosphate monoester + H2O = an alcohol + phosphate. It carries out the reaction 2 a phenolic donor + H2O2 = 2 a phenolic radical donor + 2 H2O. Inhibited by phosphate and molybdate. Functionally, metallo-phosphoesterase involved in phosphate metabolism. Has a peroxidase activity. The polypeptide is Purple acid phosphatase 17 (PAP17) (Arabidopsis thaliana (Mouse-ear cress)).